A 470-amino-acid chain; its full sequence is Synaptotagmin-17 (470 aa).

The disordered stretch occupies residues 54–112 (PPWLMASRSNDKDGDSVHTASDVPLTPRTNSPDGRRSSSDTSKSTYSLTRRISSLDSRR). The segment covering 92 to 112 (SDTSKSTYSLTRRISSLDSRR) has biased composition (low complexity). Residues S114 and S115 each carry the phosphoserine modification. C2 domains lie at 180–306 (QLGM…HWWK) and 317–451 (ELGE…EQWH).

The protein belongs to the synaptotagmin family.

Its subcellular location is the membrane. In terms of biological role, plays a role in dendrite formation by melanocytes. The sequence is that of Synaptotagmin-17 (Syt17) from Mus musculus (Mouse).